The following is a 259-amino-acid chain: Small ribosomal subunit protein eS4 (259 aa).

The S4 RNA-binding domain occupies 41–100; that stretch reads LPLSLFLRNRLKYALNYTEAKKILTQRVVRVDGKVRTCHKFPTGFMDVVAIERTNEYFRM.

The protein belongs to the eukaryotic ribosomal protein eS4 family.

The chain is Small ribosomal subunit protein eS4 (rps-4) from Caenorhabditis elegans.